We begin with the raw amino-acid sequence, 154 residues long: 6,7-dimethyl-8-ribityllumazine synthase (154 aa).

Residues F22, 56–58 (AFE), and 80–82 (AVI) each bind 5-amino-6-(D-ribitylamino)uracil. 85-86 (ET) lines the (2S)-2-hydroxy-3-oxobutyl phosphate pocket. H88 acts as the Proton donor in catalysis. F113 contacts 5-amino-6-(D-ribitylamino)uracil. R127 serves as a coordination point for (2S)-2-hydroxy-3-oxobutyl phosphate.

This sequence belongs to the DMRL synthase family.

It catalyses the reaction (2S)-2-hydroxy-3-oxobutyl phosphate + 5-amino-6-(D-ribitylamino)uracil = 6,7-dimethyl-8-(1-D-ribityl)lumazine + phosphate + 2 H2O + H(+). Its pathway is cofactor biosynthesis; riboflavin biosynthesis; riboflavin from 2-hydroxy-3-oxobutyl phosphate and 5-amino-6-(D-ribitylamino)uracil: step 1/2. Functionally, catalyzes the formation of 6,7-dimethyl-8-ribityllumazine by condensation of 5-amino-6-(D-ribitylamino)uracil with 3,4-dihydroxy-2-butanone 4-phosphate. This is the penultimate step in the biosynthesis of riboflavin. The chain is 6,7-dimethyl-8-ribityllumazine synthase from Thermoanaerobacter pseudethanolicus (strain ATCC 33223 / 39E) (Clostridium thermohydrosulfuricum).